Here is a 502-residue protein sequence, read N- to C-terminus: Glutamate decarboxylase (502 aa).

Lys278 carries the N6-(pyridoxal phosphate)lysine modification. The interval 471–502 (GLHHFHMDTVETQKDIIKHWRKIAGKKTSGVC) is calmodulin-binding.

The protein belongs to the group II decarboxylase family. Pyridoxal 5'-phosphate is required as a cofactor.

The catalysed reaction is L-glutamate + H(+) = 4-aminobutanoate + CO2. In terms of biological role, catalyzes the production of GABA. The calmodulin-binding is calcium-dependent and it is proposed that this may, directly or indirectly, form a calcium regulated control of GABA biosynthesis. This is Glutamate decarboxylase from Solanum lycopersicum (Tomato).